Reading from the N-terminus, the 236-residue chain is 7-cyano-7-deazaguanine synthase (236 aa).

C7–A17 contacts ATP. Positions 185, 193, 196, and 199 each coordinate Zn(2+).

The protein belongs to the QueC family. Zn(2+) is required as a cofactor.

It carries out the reaction 7-carboxy-7-deazaguanine + NH4(+) + ATP = 7-cyano-7-deazaguanine + ADP + phosphate + H2O + H(+). It participates in purine metabolism; 7-cyano-7-deazaguanine biosynthesis. Functionally, catalyzes the ATP-dependent conversion of 7-carboxy-7-deazaguanine (CDG) to 7-cyano-7-deazaguanine (preQ(0)). This is 7-cyano-7-deazaguanine synthase from Rhizobium etli (strain CIAT 652).